The following is a 287-amino-acid chain: PPP2R1A-PPP2R2A-interacting phosphatase regulator 1 (287 aa).

The disordered stretch occupies residues 1–44 (MAQEKMELDLELPPGTGGSPAEGGGSGGGGGLRRSNSAPLIHGL). Positions 15–32 (GTGGSPAEGGGSGGGGGL) are enriched in gly residues. A Phosphoserine modification is found at serine 35. Serine 37 is modified (phosphoserine; by CHEK1). Serine 45 carries the post-translational modification Phosphoserine. Threonine 47 bears the Phosphothreonine mark. Serine 48, serine 62, and serine 76 each carry phosphoserine. Residue lysine 89 forms a Glycyl lysine isopeptide (Lys-Gly) (interchain with G-Cter in SUMO1) linkage. Phosphoserine occurs at positions 143 and 147. Threonine 149 carries the phosphothreonine modification. Disordered stretches follow at residues 167–189 (SNGL…RSQS) and 236–287 (GVCV…LSSK). Low complexity-rich tracts occupy residues 178-189 (PTTRFTTRRSQS) and 246-257 (GNSSSAGSSCNS). Residues serine 187 and serine 189 each carry the phosphoserine modification. The span at 259-270 (AKVSTTTDSPVS) shows a compositional bias: polar residues. Residues serine 267, serine 270, and serine 276 each carry the phosphoserine modification.

This sequence belongs to the FAM122 family. Interacts with PPP2CA and PPP2R1A. Interacts (via its N-terminus) with PPP2R2A; the interaction is direct and this interaction inhibits PP2A activity. The CHEK1-mediated Ser-37 phosphorylated form interacts with 14-3-3 proteins. Post-translationally, CHEK1-mediated phosphorylation at Ser-37 negatively regulates its ability to inhibit serine/threonine-protein phosphatase 2A (PP2A) activity. Phosphorylation leads to its release from the PP2A complex and its sequestration by 14-3-3 proteins in the cytoplasm resulting in its inability to translocate to the nucleus, where it otherwise inhibits PP2A.

It is found in the nucleus. The protein resides in the cytoplasm. Functionally, acts as an inhibitor of serine/threonine-protein phosphatase 2A (PP2A) activity. Inhibits PP2A activity by blocking the substrate binding site on PPP2R2A and the active site of PPP2CA. Potentiates ubiquitin-mediated proteasomal degradation of serine/threonine-protein phosphatase 2A catalytic subunit alpha (PPP2CA). Inhibits PP2A-mediated dephosphorylation of WEE1, promoting ubiquitin-mediated proteolysis of WEE1, thereby releasing G2/M checkpoint. This chain is PPP2R1A-PPP2R2A-interacting phosphatase regulator 1, found in Homo sapiens (Human).